A 535-amino-acid polypeptide reads, in one-letter code: Sucrose transport protein SUT5 (535 aa).

Topologically, residues 1 to 53 are cytoplasmic; the sequence is MEEGRRGDREAKSAAGWTALSTTKTTLEEKRRLQANGSVGGDAGTSGFRRIVR. Residues 54–74 form a helical membrane-spanning segment; sequence LFFACMVAGGIQYGWALQLSL. At 75-87 the chain is on the extracellular side; that stretch reads LSPYSQTLGISHS. The chain crosses the membrane as a helical span at residues 88 to 108; it reads YVSLTWICGPIAGFVVQPIVG. Topologically, residues 109-122 are cytoplasmic; sequence YYSDRCTMKMGRRR. A helical transmembrane segment spans residues 123–143; sequence PFILVGCLIICISVMIIGFSA. The Extracellular segment spans residues 144 to 163; that stretch reads DIGRHLGDTKEHCSTYTGPR. Residues 164 to 184 form a helical membrane-spanning segment; that stretch reads WSAAMVYIVGFWFLDFANNTV. The Cytoplasmic portion of the chain corresponds to 185–203; it reads QGPARAMMADLSAGHHGPN. A helical transmembrane segment spans residues 204–224; that stretch reads VGQSIFSLWMAIGSVLGYLSG. Over 225–249 the chain is Extracellular; sequence ANGKWHEWFPWLKTAACCDACANLK. The helical transmembrane segment at 250 to 270 threads the bilayer; that stretch reads GAFFTAVLLIVVSMTVTMYLA. Topologically, residues 271–302 are cytoplasmic; it reads DEMPLDKQDVDTSGGGGCAVFVDLFKSLRNLP. The helical transmembrane segment at 303-323 threads the bilayer; it reads PAMFKVLAVTAVTWLSWFPFI. Residues 324–354 are Extracellular-facing; sequence QYNTDWMGREIYHGEPQGTAAKADVYDAGVR. Residues 355-375 form a helical membrane-spanning segment; that stretch reads EGAMGLLFCSVALGVTSFVIP. At 376 to 384 the chain is on the cytoplasmic side; it reads KLCRRLTSK. A helical transmembrane segment spans residues 385-405; it reads VVWSISNFLVFALMAVMVAVG. Residues 406–429 lie on the Extracellular side of the membrane; it reads MVSMRGYRPSLAAGLTGPDPTLKA. A helical transmembrane segment spans residues 430-450; the sequence is VALVVFALIGIPQAVLFSVPW. The Cytoplasmic segment spans residues 451-465; the sequence is AVASEVTAEEGGGQG. The helical transmembrane segment at 466–486 threads the bilayer; it reads LAIGVLNIAIVVPQLVIALTA. Residues 487–498 are Extracellular-facing; it reads GPIDGAFNKGNT. A helical membrane pass occupies residues 499–519; the sequence is PAFGIGGAFAFICGVLALIWL. At 520-535 the chain is on the cytoplasmic side; that stretch reads PKTRGVSNAAVVAGGH.

This sequence belongs to the glycoside-pentoside-hexuronide (GPH) cation symporter transporter (TC 2.A.2.4) family. Homodimer.

It is found in the cell membrane. The protein operates within glycan biosynthesis; sucrose metabolism. Functionally, responsible for the transport of sucrose into the cell, with the concomitant uptake of protons (symport system). May also transport other glucosides. This Oryza sativa subsp. indica (Rice) protein is Sucrose transport protein SUT5 (SUT5).